Consider the following 299-residue polypeptide: Troponin T, cardiac muscle (299 aa).

A compositionally biased stretch (acidic residues) spans 1 to 71; sequence MSDAEEEVVE…EARDAEDGPV (71 aa). 2 disordered regions span residues 1–97 and 137–220; these read MSDA…GERV and DRIE…EKKK. At serine 2 the chain carries N-acetylserine. The residue at position 2 (serine 2) is a Phosphoserine. Basic and acidic residues-rich tracts occupy residues 137-185 and 204-220; these read DRIE…DEAR and QTERKSGKRQTEREKKK. Phosphothreonine; by PKC/PRKCA is present on threonine 205. Serine 209 bears the Phosphoserine; by PKC/PRKCA mark. Phosphothreonine; by PKC/PRKCA and RAF1 is present on threonine 214. A Phosphothreonine; by PKC/PRKCA modification is found at threonine 295.

The protein belongs to the troponin T family. Post-translationally, phosphorylation at Thr-214 by PRKCA induces significant reduction in myofilament calcium sensitivity and actomyosin ATPase activity.

Functionally, troponin T is the tropomyosin-binding subunit of troponin, the thin filament regulatory complex which confers calcium-sensitivity to striated muscle actomyosin ATPase activity. The sequence is that of Troponin T, cardiac muscle (Tnnt2) from Rattus norvegicus (Rat).